Consider the following 446-residue polypeptide: C-type lectin domain family 18 member A (446 aa).

An N-terminal signal peptide occupies residues 1-26; that stretch reads MLHPETSPGRGHLLAVLLALLGTAWA. Residues 52–182 form the SCP domain; that stretch reads LSLHNRLRSW…AAIEAFVCAY (131 aa). The N-linked (GlcNAc...) asparagine glycan is linked to N144. The EGF-like domain maps to 228–261; it reads PRNPCRMSCQNHGRLNISTCHCHCPPGYTGRYCQ. 4 disulfide bridges follow: C236–C249, C251–C260, C327–C432, and C408–C424. The C-type lectin domain maps to 306–433; sequence IDGDCFMVSS…CKTRNRYICQ (128 aa).

N-glycosylated. As to expression, dectected in all cell lines tested and in peripheral blood cells.

The protein resides in the secreted. It localises to the endoplasmic reticulum. Its subcellular location is the golgi apparatus. The protein localises to the endosome. In terms of biological role, binds polysaccharides in a Ca(2+)-independent manner with a preferentially binding to fucoidan, beta-glucans and galactans. This Homo sapiens (Human) protein is C-type lectin domain family 18 member A (CLEC18A).